Consider the following 207-residue polypeptide: LexA repressor (207 aa).

The segment at residues 28-48 (RAEIARHLGFKSANAAEEHLK) is a DNA-binding region (H-T-H motif). Active-site for autocatalytic cleavage activity residues include Ser124 and Lys161.

The protein belongs to the peptidase S24 family. Homodimer.

It carries out the reaction Hydrolysis of Ala-|-Gly bond in repressor LexA.. Its function is as follows. Represses a number of genes involved in the response to DNA damage (SOS response), including recA and lexA. In the presence of single-stranded DNA, RecA interacts with LexA causing an autocatalytic cleavage which disrupts the DNA-binding part of LexA, leading to derepression of the SOS regulon and eventually DNA repair. The chain is LexA repressor from Pseudoalteromonas atlantica (strain T6c / ATCC BAA-1087).